The primary structure comprises 391 residues: Phosphatidate cytidylyltransferase 4, chloroplastic (391 aa).

A chloroplast-targeting transit peptide spans 1 to 61; the sequence is MATFAELVLS…SVSRRFLTAV (61 aa). The next 6 helical transmembrane spans lie at 102 to 122, 175 to 195, 202 to 222, 254 to 274, 298 to 318, and 321 to 341; these read IFGI…GWVF, FGNI…ALLV, FAQL…PSFW, VGLV…TFAF, IVGL…LSWP, and LFSS…GDLT.

This sequence belongs to the CDS family. Mg(2+) is required as a cofactor.

It is found in the plastid. It localises to the chloroplast membrane. It catalyses the reaction a 1,2-diacyl-sn-glycero-3-phosphate + CTP + H(+) = a CDP-1,2-diacyl-sn-glycerol + diphosphate. Its pathway is phospholipid metabolism; CDP-diacylglycerol biosynthesis; CDP-diacylglycerol from sn-glycerol 3-phosphate: step 3/3. With respect to regulation, highest activities is obtained at about 30 mM CTP and 2 mM phosphatidic acid (PA). Functionally, may be involved in the synthesis of minor phospholipids and in modulation of IP3-mediated signal transduction. Promotes the biosynthesis of plastidial phosphatidylglycerol (PG) which is required for structure and function of thylakoid membranes and, hence, for photoautotrophic growth. The polypeptide is Phosphatidate cytidylyltransferase 4, chloroplastic (Arabidopsis thaliana (Mouse-ear cress)).